The sequence spans 288 residues: Putative hydrolase LipZ (288 aa).

This sequence belongs to the AB hydrolase superfamily.

This chain is Putative hydrolase LipZ, found in Mycobacterium tuberculosis (strain CDC 1551 / Oshkosh).